Here is a 131-residue protein sequence, read N- to C-terminus: UPF0344 protein Sca_0577 (131 aa).

4 helical membrane-spanning segments follow: residues 1 to 21, 42 to 62, 69 to 89, and 99 to 119; these read MLHL…VSYI, LFLV…FATA, LLTL…VTLV, and GLFW…IILP.

Belongs to the UPF0344 family.

The protein resides in the cell membrane. This is UPF0344 protein Sca_0577 from Staphylococcus carnosus (strain TM300).